The primary structure comprises 131 residues: Large ribosomal subunit protein bL17 (131 aa).

Belongs to the bacterial ribosomal protein bL17 family. Part of the 50S ribosomal subunit. Contacts protein L32.

The sequence is that of Large ribosomal subunit protein bL17 from Sodalis glossinidius (strain morsitans).